A 387-amino-acid chain; its full sequence is Xylose operon regulatory protein (387 aa).

The HTH araC/xylS-type domain maps to 288–386 (IQAMHYIRHR…EMTPKEFRLN (99 aa)). 2 DNA-binding regions (H-T-H motif) span residues 305–326 (GQVL…KNEM) and 353–376 (IKEI…KKEF).

Functionally, regulatory protein for the xylBAFGHR operon. This Haemophilus influenzae (strain ATCC 51907 / DSM 11121 / KW20 / Rd) protein is Xylose operon regulatory protein (xylR).